Here is a 454-residue protein sequence, read N- to C-terminus: MSDNDTIVAQATPPGRGGVGILRISGLKAREVAETVLGKLPKPRYADYLPFKDADGSVLDQGIALWFPGPNSFTGEDVLELQGHGGPVILDLLLKRILTIPGLRIARPGEFSERAFLNDKLDLAQAEAIADLIDASSEQAARSALNSLQGAFSARVNHLVEALTHLRIYVEAAIDFPDEEIDFLSDGKIEAQLNDVIADLDAVRAEARQGSLLREGMKVVIAGRPNAGKSSLLNALAGREAAIVTDIAGTTRDVLREHIHIDGMPLHIIDTAGLREASDEVERIGIERAWQEIEQADRVLFMVDGTTTDAVDPAEIWPEFIARLPAKLPITVVRNKADITGETLGMSEVNGHALIRLSARTGEGVEVLRNHLKQSMGFDTNMEGGFLARRRHLQALEQAAEHLQQGKAQLLGAWAGELLAEELRLAQQNLSEITGEFTSDDLLGRIFSSFCIGK.

Arg-23, Glu-80, and Lys-120 together coordinate (6S)-5-formyl-5,6,7,8-tetrahydrofolate. Residues 216-377 (GMKVVIAGRP…LRNHLKQSMG (162 aa)) enclose the TrmE-type G domain. Residue Asn-226 coordinates K(+). Residues 226–231 (NAGKSS), 245–251 (TDIAGTT), 270–273 (DTAG), 335–338 (NKAD), and 358–360 (SAR) contribute to the GTP site. Ser-230 provides a ligand contact to Mg(2+). Residues Thr-245, Ile-247, and Thr-250 each contribute to the K(+) site. Thr-251 lines the Mg(2+) pocket. Lys-454 is a binding site for (6S)-5-formyl-5,6,7,8-tetrahydrofolate.

The protein belongs to the TRAFAC class TrmE-Era-EngA-EngB-Septin-like GTPase superfamily. TrmE GTPase family. As to quaternary structure, homodimer. Heterotetramer of two MnmE and two MnmG subunits. It depends on K(+) as a cofactor.

It localises to the cytoplasm. Its function is as follows. Exhibits a very high intrinsic GTPase hydrolysis rate. Involved in the addition of a carboxymethylaminomethyl (cmnm) group at the wobble position (U34) of certain tRNAs, forming tRNA-cmnm(5)s(2)U34. This is tRNA modification GTPase MnmE from Shigella sonnei (strain Ss046).